Consider the following 290-residue polypeptide: Poly-beta-1,6-N-acetyl-D-glucosamine N-deacetylase (290 aa).

The signal sequence occupies residues 1-28 (MKYRKFIILVLSILIILPVSTLDGHHIA). The 177-residue stretch at 114-290 (RSVWINFDDM…KRWDGFHEKD (177 aa)) folds into the NodB homology domain.

The protein belongs to the polysaccharide deacetylase family.

The protein localises to the secreted. It localises to the cell wall. Catalyzes the N-deacetylation of poly-beta-1,6-N-acetyl-D-glucosamine (PNAG, also referred to as PIA), a biofilm adhesin polysaccharide. N-deacetylation is crucial for attachment of the polysaccharide to the bacterial cell surface; it leads to the introduction of positive charges in the otherwise neutral PIA polymer, allowing electrostatic interactions. In Staphylococcus aureus (strain NCTC 8325 / PS 47), this protein is Poly-beta-1,6-N-acetyl-D-glucosamine N-deacetylase (icaB).